The chain runs to 487 residues: GTPase Der (487 aa).

EngA-type G domains are found at residues 3 to 166 (PVIA…PRDA) and 193 to 366 (IKIA…KSAV). Residues 9-16 (GRPNVGKS), 56-60 (DTGGI), 118-121 (NKID), 199-206 (GRPNVGKS), 246-250 (DTAGV), and 311-314 (NKWD) each bind GTP. One can recognise a KH-like domain in the interval 367–451 (TRWPTSRLTQ…PIRIEYKGGE (85 aa)). Basic and acidic residues predominate over residues 448–461 (KGGENPYEGKKNTL). Residues 448-487 (KGGENPYEGKKNTLTDRQVNKKRRLMSHHKKAEKKRRDKR) form a disordered region. Positions 467-487 (NKKRRLMSHHKKAEKKRRDKR) are enriched in basic residues.

The protein belongs to the TRAFAC class TrmE-Era-EngA-EngB-Septin-like GTPase superfamily. EngA (Der) GTPase family. As to quaternary structure, associates with the 50S ribosomal subunit.

Functionally, GTPase that plays an essential role in the late steps of ribosome biogenesis. The polypeptide is GTPase Der (Pseudomonas putida (strain W619)).